We begin with the raw amino-acid sequence, 289 residues long: 4-diphosphocytidyl-2-C-methyl-D-erythritol kinase (289 aa).

Residue Lys-16 is part of the active site. An ATP-binding site is contributed by Pro-99–Ser-109. The active site involves Asp-141.

This sequence belongs to the GHMP kinase family. IspE subfamily.

It catalyses the reaction 4-CDP-2-C-methyl-D-erythritol + ATP = 4-CDP-2-C-methyl-D-erythritol 2-phosphate + ADP + H(+). Its pathway is isoprenoid biosynthesis; isopentenyl diphosphate biosynthesis via DXP pathway; isopentenyl diphosphate from 1-deoxy-D-xylulose 5-phosphate: step 3/6. Catalyzes the phosphorylation of the position 2 hydroxy group of 4-diphosphocytidyl-2C-methyl-D-erythritol. In Ralstonia pickettii (strain 12J), this protein is 4-diphosphocytidyl-2-C-methyl-D-erythritol kinase.